The chain runs to 412 residues: Peptidyl-prolyl cis-trans isomerase FKBP8 (412 aa).

Residues 1–68 form a disordered region; sequence MASCAEPSEP…GQPPAEEAEQ (68 aa). Acidic residues predominate over residues 22–50; the sequence is EDFEVLDGVEDAEGEEEEEEEEEEEDDLS. Residues 120 to 204 enclose the PPIase FKBP-type domain; it reads GQVVTVHLQT…CLEVTLKTAV (85 aa). Residues aspartate 149 and aspartate 151 each contribute to the Ca(2+) site. The TPR 1 repeat unit spans residues 221-254; it reads ANRKRECGNAHYQRADFVLAANSYDLAIKAITSS. Glycyl lysine isopeptide (Lys-Gly) (interchain with G-Cter in ubiquitin) cross-links involve residues lysine 249, lysine 271, lysine 273, and lysine 284. TPR repeat units lie at residues 272-305 and 306-339; these read VKCL…QPDN and IKAL…EPSN. Serine 296 is modified (phosphoserine). Residues lysine 307, lysine 314, lysine 334, lysine 340, lysine 348, lysine 351, and lysine 352 each participate in a glycyl lysine isopeptide (Lys-Gly) (interchain with G-Cter in ubiquitin) cross-link. A helical membrane pass occupies residues 390 to 410; sequence WLFGATAVALGGVALSVVIAA.

As to quaternary structure, homomultimers or heteromultimers (Potential). Forms heterodimer with calmodulin. When activated by calmodulin and calcium, interacts with the BH4 domain of BCL2 and weakly with BCL2L1/BCLX isoform Bcl-X(L). Does not bind and inhibit calcineurin. Interacts with ZFYVE27; may negatively regulate ZFYVE27 phosphorylation. In terms of assembly, (Microbial infection) Interacts with hepatitis C/HCV protein NS5A. Ca(2+) serves as cofactor. Post-translationally, ubiquitinated by PRKN during mitophagy, leading to its degradation and enhancement of mitophagy. Deubiquitinated by USP30. As to expression, widely expressed. Highest levels seen in the brain. Highly abundant in the retina.

It localises to the mitochondrion. The protein resides in the mitochondrion membrane. It carries out the reaction [protein]-peptidylproline (omega=180) = [protein]-peptidylproline (omega=0). Constitutively inactive PPiase, which becomes active when bound to calmodulin and calcium. Seems to act as a chaperone for BCL2, targets it to the mitochondria and modulates its phosphorylation state. The BCL2/FKBP8/calmodulin/calcium complex probably interferes with the binding of BCL2 to its targets. The active form of FKBP8 may therefore play a role in the regulation of apoptosis. Involved in the inhibition of viral infection by influenza A viruses (IAV). The sequence is that of Peptidyl-prolyl cis-trans isomerase FKBP8 (FKBP8) from Homo sapiens (Human).